Here is a 1023-residue protein sequence, read N- to C-terminus: Probable histidine kinase 3 (1023 aa).

Residues 1–80 are Cytoplasmic-facing; the sequence is MDEMSCGGGG…RGWRVVRETW (80 aa). Residues 81-101 traverse the membrane as a helical segment; it reads WWVLLLWILAGSLGSFYLFLF. Topologically, residues 102–387 are extracellular; it reads MNAQSLDKRR…CRFEKKPPWP (286 aa). Positions 151 to 352 constitute a CHASE domain; sequence TPSAIDQMTF…TNESPISMYG (202 aa). The chain crosses the membrane as a helical span at residues 388 to 408; it reads WLAITSSFGTLVIALLTGHIF. Residues 409–1023 lie on the Cytoplasmic side of the membrane; it reads QATVHRIAKV…RFFQNHDQVE (615 aa). A Histidine kinase domain is found at 445–715; the sequence is TVSHEIRTPM…TFTFTAVLMR (271 aa). Phosphohistidine; by autocatalysis is present on H448. 2 consecutive Response regulatory domains span residues 732–854 and 880–1016; these read NALV…RRAL and QIIV…ARFF. The residue at position 783 (D783) is a 4-aspartylphosphate. The segment at 812 to 831 is disordered; it reads LFLLGSSASSPKGGSDTSRE. The span at 817 to 827 shows a compositional bias: polar residues; the sequence is SSASSPKGGSD. 4-aspartylphosphate is present on D930.

In terms of processing, activation probably requires a transfer of a phosphate group between a His in the transmitter domain and an Asp of the receiver domain. Highly expressed in young leaves and at lower levels in roots, mature leaves, stems and spikelets.

It localises to the cell membrane. The enzyme catalyses ATP + protein L-histidine = ADP + protein N-phospho-L-histidine.. Functionally, cytokinin receptor related to bacterial two-component regulators. Functions as a histidine kinase and transmits the stress signal to a downstream MAPK cascade. The chain is Probable histidine kinase 3 from Oryza sativa subsp. japonica (Rice).